The primary structure comprises 475 residues: MVDTEMPFWPTNFGIGSVDLSVMDDHSHSFDIKPFTTVDFSSISAPHYEDLPFARADPMVADYKYDLKLQEYQSAIKVEPASPPYYSEKTQLYNKTHEEPSNSLMAIECRVCSDKASGFHYGVHACEGCKGFFRRTIRLKLIYDRCDLNCRIHKKSRNKCQYCRFQKCLAVGMSHNAIRFGRMPQAEKEKLLAEISSDIDQLNPESADLRALAKHLYDSYIKSFPLTKAKARAILTGKTTDKSPFVIYDMNSLMMGEDKIKFKHITPLQEQSKEVAIRIFQGCQFRSVEAVQEITEYAKNIPGFVSLDLNDQVTLLKYGVHEIIYTMLASLMNKDGVLISEGQGFMTREFLKSLRKPFGDFMEPKFEFAVKFNALELDDSDLAIFIAVIILSGDRPGLLNVKPIEDIQDNLLQALELQLKLNHPEASQLFAKLLQKMTDLRQIVTEHVQLLQVIKKTETDMSLHPLLQEIYKDLY.

Ser82 carries the phosphoserine; by MAPK modification. The segment at residues 106 to 180 (AIECRVCSDK…VGMSHNAIRF (75 aa)) is a DNA-binding region (nuclear receptor). NR C4-type zinc fingers lie at residues 109–129 (CRVC…CEGC) and 146–168 (CDLN…FQKC). The tract at residues 175–250 (HNAIRFGRMP…DKSPFVIYDM (76 aa)) is interaction with FAM120B. The region spanning 208–473 (DLRALAKHLY…HPLLQEIYKD (266 aa)) is the NR LBD domain. A Glycyl lysine isopeptide (Lys-Gly) (interchain with G-Cter in ubiquitin) cross-link involves residue Lys222. Residues 465-473 (PLLQEIYKD) carry the 9aaTAD motif.

The protein belongs to the nuclear hormone receptor family. NR1 subfamily. In terms of assembly, interacts with FOXO1 (acetylated form). Heterodimer with other nuclear receptors, such as RXRA. The heterodimer with the retinoic acid receptor RXRA is called adipocyte-specific transcription factor ARF6. Interacts with NCOA6 coactivator, leading to a strong increase in transcription of target genes. Interacts with coactivator PPARBP, leading to a mild increase in transcription of target genes. Interacts with NOCA7 in a ligand-inducible manner. Interacts with NCOA1 and NCOA2 LXXLL motifs. Interacts with ASXL1, ASXL2, DNTTIP2, FAM120B, MAP2K1/MEK1, NR0B2, PDPK1, PRDM16, PRMT2 and TGFB1I1. Interacts (when activated by agonist) with PPP5C. Interacts with HELZ2 and THRAP3; the interaction stimulates the transcriptional activity of PPARG. Interacts with PER2, the interaction is ligand dependent and blocks PPARG recruitment to target promoters. Interacts with NOCT. Interacts with ACTN4. Interacts (when in the liganded conformation) with GPS2. Interacts with CRY1 and CRY2 in a ligand-dependent manner. In the absence of hormonal ligand, interacts with TACC1. In macrophages, interacts with PAQR3 and STUB1; the interactions promote PPARG poylubiquitination and STUB1-mediated degradation. Post-translationally, phosphorylated at basal conditions and dephosphorylated when treated with the ligand. May be dephosphorylated by PPP5C. The phosphorylated form may be inactive and dephosphorylation induces adipogenic activity. Ubiquitinated by E3 ubiquitin-protein ligase complex containing FBXO9; leading to proteasomal degradation. Ubiquitinated at Lys-222 by TRIM55 leading to proteasomal degradation. Ubiquitinated by E3 ubiquitin-protein ligase STUB1/CHIP; leading to proteasomal degradation.

It is found in the nucleus. The protein resides in the cytoplasm. Its activity is regulated as follows. PDPK1 activates its transcriptional activity independently of its kinase activity. In terms of biological role, nuclear receptor that binds peroxisome proliferators such as hypolipidemic drugs and fatty acids. Once activated by a ligand, the nuclear receptor binds to DNA specific PPAR response elements (PPRE) and modulates the transcription of its target genes, such as acyl-CoA oxidase. It therefore controls the peroxisomal beta-oxidation pathway of fatty acids. Key regulator of adipocyte differentiation and glucose homeostasis. ARF6 acts as a key regulator of the tissue-specific adipocyte P2 (aP2) enhancer. Acts as a critical regulator of gut homeostasis by suppressing NF-kappa-B-mediated pro-inflammatory responses. Plays a role in the regulation of cardiovascular circadian rhythms by regulating the transcription of BMAL1 in the blood vessels. The sequence is that of Peroxisome proliferator-activated receptor gamma (PPARG) from Oryctolagus cuniculus (Rabbit).